The chain runs to 2282 residues: Cation channel sperm-associated targeting subunit tau (2282 aa).

The disordered stretch occupies residues 1–118; that stretch reads MELPPPGNRR…RGKGKGTGTR (118 aa). Polar residues-rich tracts occupy residues 11–41 and 50–87; these read VSINNPQETSGRVPTTSAGFPTQSSKISLKR and MMSNRSSGGQSLLPSSILQKTSLNPPGSLQSKPSNLSS. Residues 90–109 are compositionally biased toward basic and acidic residues; that stretch reads YADEEGKPLTDKNKDKDKGR. The region spanning 131 to 266 is the C2 domain; the sequence is QSDEMAIANQ…IQKGCFTEVM (136 aa). Disordered regions lie at residues 397-416, 656-679, 747-1066, 1104-1153, 1217-1240, 1426-1445, 1452-1515, 1542-1569, 1908-1928, and 2187-2222; these read MTKRDNKGSSIPSESNSSAL, EHEDQDPPYPGHSGSAGSDATWAE, NKLI…SHDP, SAKS…DKQS, YTNDEGYSPPPSVHSRPSDSTDDR, NSLLDSQTTSSTEQYSDSRS, RQNT…SLDK, ERRQQPEKDSESLIKHSSSSGSEHLEKT, NQANPLTRSPERPSDISLKKQ, and PKKSKSGARLLGKSPEDSHNQAKHCARPYTAPEPNK. 5 stretches are compositionally biased toward polar residues: residues 750–760, 783–792, 800–841, 849–858, and 953–974; these read ITDSSFNTTKP, SDPSSNTTKP, DPSS…SDLN, IVSTISSDPN, and SARSSDPNKLSRDPSINSTKLS. A compositionally biased stretch (low complexity) spans 1104–1123; the sequence is SAKSLDSNNSSASSSPTVNS. Residues 1124 to 1136 are compositionally biased toward polar residues; it reads DTTTNAAEPSGTK. Composition is skewed to polar residues over residues 1452–1466 and 1473–1482; these read RQNTSSINPLDSSVS and DCQSISTQES. Residues 1484-1493 are compositionally biased toward basic and acidic residues; that stretch reads YPVRDTKSDS. A compositionally biased stretch (acidic residues) spans 1495–1504; that stretch reads NDTEEMELDS. Composition is skewed to basic and acidic residues over residues 1542 to 1555 and 1916 to 1925; these read ERRQQPEKDSESLI and SPERPSDISL.

Component of the CatSper complex or CatSpermasome composed of the core pore-forming members CATSPER1, CATSPER2, CATSPER3 and CATSPER4 as well as auxiliary members CATSPERB, CATSPERG, CATSPERD, CATSPERE, CATSPERZ, C2CD6/CATSPERT, SLCO6C1, TMEM249, TMEM262 and EFCAB9. HSPA1 may be an additional auxiliary complex member. The core complex members CATSPER1, CATSPER2, CATSPER3 and CATSPER4 form a heterotetrameric channel. The auxiliary CATSPERB, CATSPERG, CATSPERD and CATSPERE subunits form a pavilion-like structure over the pore which stabilizes the complex through interactions with CATSPER4, CATSPER3, CATSPER1 and CATSPER2 respectively. SLCO6C1 interacts with CATSPERE and TMEM262/CATSPERH interacts with CATSPERB, further stabilizing the complex. C2CD6/CATSPERT interacts at least with CATSPERD and is required for targeting the CatSper complex in the flagellar membrane. In terms of tissue distribution, expressed in cauda sperm (at protein level).

It is found in the cell projection. The protein localises to the cilium. The protein resides in the flagellum membrane. Functionally, auxiliary component of the CatSper complex, a complex involved in sperm cell hyperactivation. Sperm cell hyperactivation is needed for sperm motility which is essential late in the preparation of sperm for fertilization. Required for CatSper complex targeting and trafficking into the quadrilinear nanodomains. Targets the preassembled CatSper complexes to elongating flagella, where it links the channel-carrying vesicles and motor proteins. This is Cation channel sperm-associated targeting subunit tau from Mus musculus (Mouse).